The chain runs to 372 residues: Protein zntB (372 aa).

A run of 3 helical transmembrane segments spans residues 15 to 35 (LIMCFLSGLSTAIGGLYVIFI), 42 to 62 (LLGHLLSFSSGVMIYISFMDL), and 70 to 90 (IGFYNANIWFFVGIIFFAVIL). The tract at residues 99 to 166 (ESGDSNHAHS…IAKSKNKKKS (68 aa)) is disordered. The segment covering 114 to 124 (IEKHSSEKKEV) has biased composition (basic and acidic residues). The stretch at 133 to 167 (NGKDKKQKQQKQKQQKQQQQQKQNIAKSKNKKKSK) forms a coiled coil. Residues 137 to 146 (KKQKQQKQKQ) are compositionally biased toward basic residues. Low complexity predominate over residues 147-159 (QKQQQQQKQNIAK). 5 consecutive transmembrane segments (helical) span residues 170 to 192 (YLNSVGIATAIGVSLHNFPEGVA), 207 to 229 (LMLAIAAHNIPEGMAVAAPIFSA), 237 to 257 (FKYCLYSGLCEPVGAIIFGLI), 271 to 291 (LAAVAGIMVFMVIKELLPAAF), and 301 to 321 (FSNIIGMIFFFFSIHFLHSML). The tract at residues 328 to 372 (AGDGGHGHSHGGHGHSHGHGHSHGGHSHDSQHVESPQSSSFNAFA) is disordered. The segment covering 334–352 (GHSHGGHGHSHGHGHSHGG) has biased composition (basic residues). Residues 360-372 (VESPQSSSFNAFA) are compositionally biased toward polar residues.

The protein belongs to the ZIP transporter (TC 2.A.5) family. ZupT subfamily.

It is found in the membrane. In terms of biological role, may transport divalent cations. May participate, with dstA, in the regulation of the differentiation of stalk cells during development. The polypeptide is Protein zntB (zntB) (Dictyostelium discoideum (Social amoeba)).